The chain runs to 67 residues: Protein C' (67 aa).

This sequence belongs to the rhabdoviruses C protein family.

Functionally, seems to stimulates transcription by the viral polymerase. May play a role in viral pathogenesis or transmission by insects vectors. The chain is Protein C' (P) from Vesicular stomatitis Indiana virus (strain 98COE North America) (VSIV).